The sequence spans 391 residues: Polyisoprenyl-teichoic acid--peptidoglycan teichoic acid transferase TagV (391 aa).

At 1–23 (MAERVRVRVRKKKKSKRRKILKR) the chain is on the cytoplasmic side. A helical; Signal-anchor for type II membrane protein transmembrane segment spans residues 24-44 (IMLLFALALLVVVGLGGYKLY). Residues 45-391 (KTINAADESY…TTNSTTDSSY (347 aa)) lie on the Extracellular side of the membrane. The interval 329–391 (DYTPDTSTGT…TTNSTTDSSY (63 aa)) is disordered. Low complexity predominate over residues 333 to 391 (DTSTGTSGTEDGTDSSSSSGSTGSTGTTTDGTTNGSSYSNDSSTSSNNSTTNSTTDSSY).

It belongs to the LytR/CpsA/Psr (LCP) family.

It is found in the cell membrane. Its pathway is cell wall biogenesis. In terms of biological role, may catalyze the final step in cell wall teichoic acid biosynthesis, the transfer of the anionic cell wall polymers (APs) from their lipid-linked precursor to the cell wall peptidoglycan (PG). The polypeptide is Polyisoprenyl-teichoic acid--peptidoglycan teichoic acid transferase TagV (Bacillus subtilis (strain 168)).